Consider the following 205-residue polypeptide: uncharacterized protein (205 aa).

Positions 1–19 (MKTLCVLSIFLALLGGLCT) are cleaved as a signal peptide. The segment covering 40–133 (VSSVASTSTP…PKTSKNNPKT (94 aa)) has biased composition (low complexity). The disordered stretch occupies residues 40–135 (VSSVASTSTP…TSKNNPKTQE (96 aa)). A helical membrane pass occupies residues 147-167 (GILYLFILLLIIFVIILICFI).

The protein localises to the host membrane. This is an uncharacterized protein from Equine herpesvirus 2 (strain 86/87) (EHV-2).